The sequence spans 365 residues: S-adenosylmethionine:tRNA ribosyltransferase-isomerase (365 aa).

Belongs to the QueA family. Monomer.

Its subcellular location is the cytoplasm. The enzyme catalyses 7-aminomethyl-7-carbaguanosine(34) in tRNA + S-adenosyl-L-methionine = epoxyqueuosine(34) in tRNA + adenine + L-methionine + 2 H(+). The protein operates within tRNA modification; tRNA-queuosine biosynthesis. Its function is as follows. Transfers and isomerizes the ribose moiety from AdoMet to the 7-aminomethyl group of 7-deazaguanine (preQ1-tRNA) to give epoxyqueuosine (oQ-tRNA). The polypeptide is S-adenosylmethionine:tRNA ribosyltransferase-isomerase (Rickettsia africae (strain ESF-5)).